Here is a 145-residue protein sequence, read N- to C-terminus: ATP synthase epsilon chain (145 aa).

The segment covering 93–104 has biased composition (basic and acidic residues); it reads AEAEKARARAQE. Residues 93–113 form a disordered region; that stretch reads AEAEKARARAQEALKNPDASK.

The protein belongs to the ATPase epsilon chain family. F-type ATPases have 2 components, CF(1) - the catalytic core - and CF(0) - the membrane proton channel. CF(1) has five subunits: alpha(3), beta(3), gamma(1), delta(1), epsilon(1). CF(0) has three main subunits: a, b and c.

Its subcellular location is the cell inner membrane. In terms of biological role, produces ATP from ADP in the presence of a proton gradient across the membrane. The sequence is that of ATP synthase epsilon chain from Francisella philomiragia subsp. philomiragia (strain ATCC 25017 / CCUG 19701 / FSC 153 / O#319-036).